Reading from the N-terminus, the 144-residue chain is Bacilliredoxin BH1716 (144 aa).

Belongs to the bacilliredoxin family.

The polypeptide is Bacilliredoxin BH1716 (Halalkalibacterium halodurans (strain ATCC BAA-125 / DSM 18197 / FERM 7344 / JCM 9153 / C-125) (Bacillus halodurans)).